We begin with the raw amino-acid sequence, 163 residues long: Putative protein CASTOR3P (163 aa).

Belongs to the GATS family.

The chain is Putative protein CASTOR3P from Homo sapiens (Human).